The primary structure comprises 154 residues: 6,7-dimethyl-8-ribityllumazine synthase (154 aa).

Residues F22, 56–58 (AFE), and 80–82 (AVI) each bind 5-amino-6-(D-ribitylamino)uracil. 85–86 (AT) serves as a coordination point for (2S)-2-hydroxy-3-oxobutyl phosphate. H88 serves as the catalytic Proton donor. F113 lines the 5-amino-6-(D-ribitylamino)uracil pocket. R127 contacts (2S)-2-hydroxy-3-oxobutyl phosphate.

This sequence belongs to the DMRL synthase family.

It carries out the reaction (2S)-2-hydroxy-3-oxobutyl phosphate + 5-amino-6-(D-ribitylamino)uracil = 6,7-dimethyl-8-(1-D-ribityl)lumazine + phosphate + 2 H2O + H(+). Its pathway is cofactor biosynthesis; riboflavin biosynthesis; riboflavin from 2-hydroxy-3-oxobutyl phosphate and 5-amino-6-(D-ribitylamino)uracil: step 1/2. Functionally, catalyzes the formation of 6,7-dimethyl-8-ribityllumazine by condensation of 5-amino-6-(D-ribitylamino)uracil with 3,4-dihydroxy-2-butanone 4-phosphate. This is the penultimate step in the biosynthesis of riboflavin. In Syntrophobacter fumaroxidans (strain DSM 10017 / MPOB), this protein is 6,7-dimethyl-8-ribityllumazine synthase.